We begin with the raw amino-acid sequence, 209 residues long: Potassium-transporting ATPase KdpC subunit (209 aa).

The chain crosses the membrane as a helical span at residues 10–30; the sequence is VISLVFLFVLGFLFPTVTSLI.

This sequence belongs to the KdpC family. The system is composed of three essential subunits: KdpA, KdpB and KdpC.

It localises to the cell membrane. In terms of biological role, part of the high-affinity ATP-driven potassium transport (or Kdp) system, which catalyzes the hydrolysis of ATP coupled with the electrogenic transport of potassium into the cytoplasm. This subunit acts as a catalytic chaperone that increases the ATP-binding affinity of the ATP-hydrolyzing subunit KdpB by the formation of a transient KdpB/KdpC/ATP ternary complex. In Thermoplasma volcanium (strain ATCC 51530 / DSM 4299 / JCM 9571 / NBRC 15438 / GSS1), this protein is Potassium-transporting ATPase KdpC subunit.